The chain runs to 795 residues: Forkhead box protein P4 (795 aa).

Polar residues predominate over residues Met-1–Ala-25. Residues Met-1–Met-62 form a disordered region. Positions Ala-36–Asp-45 are enriched in low complexity. Phosphoserine is present on residues Ser-58 and Ser-92. Lys-181 is covalently cross-linked (Glycyl lysine isopeptide (Lys-Gly) (interchain with G-Cter in SUMO2)). Disordered regions lie at residues Pro-233–Gln-252 and Thr-265–Gly-310. Residues Ser-292–Pro-303 are compositionally biased toward basic and acidic residues. Residues Gly-312–His-337 form a C2H2-type zinc finger. Positions Val-354–Leu-375 are leucine-zipper. The tract at residues Pro-379–Lys-437 is disordered. Lys-383 is covalently cross-linked (Glycyl lysine isopeptide (Lys-Gly) (interchain with G-Cter in SUMO2)). Positions Arg-459–Leu-549 form a DNA-binding region, fork-head. Ser-546 is subject to Phosphoserine. The interval Ala-589–Met-671 is disordered. Over residues Ser-609–Ile-627 the composition is skewed to polar residues. Basic and acidic residues predominate over residues Gln-628–Pro-642.

In terms of assembly, forms homodimers and heterodimers with FOXP1 and FOXP2. Dimerization is required for DNA-binding. In terms of tissue distribution, expressed in the adult heart, brain, spleen lung, liver, kidney and testes.

Its subcellular location is the nucleus. Transcriptional repressor that represses lung-specific expression. This chain is Forkhead box protein P4, found in Mus musculus (Mouse).